Consider the following 635-residue polypeptide: Probable potassium transport system protein Kup (635 aa).

12 helical membrane-spanning segments follow: residues 20–40 (MALV…SPLY), 62–82 (VLSL…VTII), 111–131 (AYVV…DGVI), 149–169 (PSLH…VFMV), 180–200 (VFGP…IWNI), 223–243 (GWHG…GEAL), 259–279 (WYFF…ALVL), 292–312 (AVPS…AVIA), 349–369 (IYVP…VLIF), 377–397 (VAYG…LALV), 408–428 (WVLP…IANG), and 429–449 (AKLL…FTLM).

The protein belongs to the HAK/KUP transporter (TC 2.A.72) family.

Its subcellular location is the cell inner membrane. It catalyses the reaction K(+)(in) + H(+)(in) = K(+)(out) + H(+)(out). Functionally, transport of potassium into the cell. Likely operates as a K(+):H(+) symporter. The polypeptide is Probable potassium transport system protein Kup (Xanthomonas campestris pv. campestris (strain 8004)).